Reading from the N-terminus, the 230-residue chain is Large ribosomal subunit protein uL1 (230 aa).

It belongs to the universal ribosomal protein uL1 family. As to quaternary structure, part of the 50S ribosomal subunit.

Binds directly to 23S rRNA. The L1 stalk is quite mobile in the ribosome, and is involved in E site tRNA release. In terms of biological role, protein L1 is also a translational repressor protein, it controls the translation of the L11 operon by binding to its mRNA. The sequence is that of Large ribosomal subunit protein uL1 from Gluconobacter oxydans (strain 621H) (Gluconobacter suboxydans).